Reading from the N-terminus, the 252-residue chain is Aspartate/glutamate leucyltransferase (252 aa).

The protein belongs to the R-transferase family. Bpt subfamily.

It localises to the cytoplasm. It catalyses the reaction N-terminal L-glutamyl-[protein] + L-leucyl-tRNA(Leu) = N-terminal L-leucyl-L-glutamyl-[protein] + tRNA(Leu) + H(+). The catalysed reaction is N-terminal L-aspartyl-[protein] + L-leucyl-tRNA(Leu) = N-terminal L-leucyl-L-aspartyl-[protein] + tRNA(Leu) + H(+). Functions in the N-end rule pathway of protein degradation where it conjugates Leu from its aminoacyl-tRNA to the N-termini of proteins containing an N-terminal aspartate or glutamate. The chain is Aspartate/glutamate leucyltransferase from Afipia carboxidovorans (strain ATCC 49405 / DSM 1227 / KCTC 32145 / OM5) (Oligotropha carboxidovorans).